The following is a 158-amino-acid chain: uncharacterized protein (158 aa).

2 disordered regions span residues 1-86 (MDFR…DHWW) and 138-158 (ASQVGSGKAGPCTPHPSLLGF). Over residues 7-76 (SPTTCTTPAS…PTPASSGSAA (70 aa)) the composition is skewed to low complexity.

This is an uncharacterized protein from Homo sapiens (Human).